A 329-amino-acid polypeptide reads, in one-letter code: Putative GTPase Obg (329 aa).

An Obg domain is found at 1-159 (MQFIDQARIM…WPLQLELKLL (159 aa)). The OBG-type G domain occupies 160-328 (AEVGIIGLPN…LKTQIWQQLG (169 aa)). GTP contacts are provided by residues 166-173 (GLPNAGKS), 191-195 (FTTLI), 213-216 (DIPG), 280-283 (SKIE), and 309-311 (SSA). Residues Ser-173 and Thr-193 each coordinate Mg(2+).

Belongs to the TRAFAC class OBG-HflX-like GTPase superfamily. OBG GTPase family. Monomer. The cofactor is Mg(2+).

It localises to the plastid. Its subcellular location is the organellar chromatophore. An essential GTPase which binds GTP, GDP and possibly (p)ppGpp with moderate affinity, with high nucleotide exchange rates and a fairly low GTP hydrolysis rate. The sequence is that of Putative GTPase Obg from Paulinella chromatophora.